The primary structure comprises 356 residues: NADH-quinone oxidoreductase subunit H (356 aa).

8 helical membrane-spanning segments follow: residues 18 to 38, 87 to 107, 120 to 140, 166 to 186, 205 to 225, 265 to 285, 292 to 312, and 333 to 353; these read IIMIAQSVLLLVVLLIAIAYI, GVFLLAPLVSCVLALAAWAVI, VGILFIFAISSLSIYGIIMAG, IGFVIITVLLCAGTLNLSAVV, ILNWYVWPLFPMFVVFYVSAL, AITTMCALATILFLGGWLPPI, WVPGVIWFALKLFFMFFLIAM, and FLPLSLVMVVVVAGVLHFAGI.

This sequence belongs to the complex I subunit 1 family. NDH-1 is composed of 14 different subunits. Subunits NuoA, H, J, K, L, M, N constitute the membrane sector of the complex.

The protein localises to the cell inner membrane. The enzyme catalyses a quinone + NADH + 5 H(+)(in) = a quinol + NAD(+) + 4 H(+)(out). Its function is as follows. NDH-1 shuttles electrons from NADH, via FMN and iron-sulfur (Fe-S) centers, to quinones in the respiratory chain. The immediate electron acceptor for the enzyme in this species is believed to be ubiquinone. Couples the redox reaction to proton translocation (for every two electrons transferred, four hydrogen ions are translocated across the cytoplasmic membrane), and thus conserves the redox energy in a proton gradient. This subunit may bind ubiquinone. The polypeptide is NADH-quinone oxidoreductase subunit H (Bradyrhizobium sp. (strain ORS 278)).